We begin with the raw amino-acid sequence, 179 residues long: Large ribosomal subunit protein bL9 (179 aa).

This sequence belongs to the bacterial ribosomal protein bL9 family.

In terms of biological role, binds to the 23S rRNA. This is Large ribosomal subunit protein bL9 from Bartonella bacilliformis (strain ATCC 35685 / KC583 / Herrer 020/F12,63).